We begin with the raw amino-acid sequence, 138 residues long: Protein FAM136A (138 aa).

The residue at position 2 (Ala-2) is an N-acetylalanine. A phosphothreonine mark is found at Thr-124 and Thr-126.

Belongs to the FAM136 family.

The polypeptide is Protein FAM136A (FAM136A) (Bos taurus (Bovine)).